Consider the following 173-residue polypeptide: Phosphopantetheine adenylyltransferase (173 aa).

Threonine 9 serves as a coordination point for substrate. Residues 9–10 (TF) and histidine 17 contribute to the ATP site. 3 residues coordinate substrate: lysine 41, threonine 75, and arginine 89. ATP-binding positions include 90–92 (GLR), glutamate 100, and 125–131 (HIYLSSS).

The protein belongs to the bacterial CoaD family. Homohexamer. The cofactor is Mg(2+).

The protein localises to the cytoplasm. It catalyses the reaction (R)-4'-phosphopantetheine + ATP + H(+) = 3'-dephospho-CoA + diphosphate. The protein operates within cofactor biosynthesis; coenzyme A biosynthesis; CoA from (R)-pantothenate: step 4/5. Reversibly transfers an adenylyl group from ATP to 4'-phosphopantetheine, yielding dephospho-CoA (dPCoA) and pyrophosphate. This is Phosphopantetheine adenylyltransferase from Methylacidiphilum infernorum (isolate V4) (Methylokorus infernorum (strain V4)).